A 207-amino-acid chain; its full sequence is Ribosomal RNA small subunit methyltransferase G (207 aa).

S-adenosyl-L-methionine-binding positions include Gly-73, Leu-78, Val-124 to Glu-125, and Arg-139.

The protein belongs to the methyltransferase superfamily. RNA methyltransferase RsmG family.

The protein resides in the cytoplasm. It catalyses the reaction guanosine(527) in 16S rRNA + S-adenosyl-L-methionine = N(7)-methylguanosine(527) in 16S rRNA + S-adenosyl-L-homocysteine. Its function is as follows. Specifically methylates the N7 position of guanine in position 527 of 16S rRNA. In Salmonella agona (strain SL483), this protein is Ribosomal RNA small subunit methyltransferase G.